Consider the following 398-residue polypeptide: 1-deoxy-D-xylulose 5-phosphate reductoisomerase (398 aa).

NADPH-binding residues include threonine 11, glycine 12, serine 13, isoleucine 14, and asparagine 125. Lysine 126 is a binding site for 1-deoxy-D-xylulose 5-phosphate. NADPH is bound at residue glutamate 127. Aspartate 151 contributes to the Mn(2+) binding site. Serine 152, glutamate 153, serine 186, and histidine 209 together coordinate 1-deoxy-D-xylulose 5-phosphate. Glutamate 153 is a Mn(2+) binding site. Glycine 215 is a binding site for NADPH. 1-deoxy-D-xylulose 5-phosphate is bound by residues serine 222, asparagine 227, lysine 228, and glutamate 231. Glutamate 231 contributes to the Mn(2+) binding site.

Belongs to the DXR family. It depends on Mg(2+) as a cofactor. Requires Mn(2+) as cofactor.

The catalysed reaction is 2-C-methyl-D-erythritol 4-phosphate + NADP(+) = 1-deoxy-D-xylulose 5-phosphate + NADPH + H(+). It participates in isoprenoid biosynthesis; isopentenyl diphosphate biosynthesis via DXP pathway; isopentenyl diphosphate from 1-deoxy-D-xylulose 5-phosphate: step 1/6. In terms of biological role, catalyzes the NADPH-dependent rearrangement and reduction of 1-deoxy-D-xylulose-5-phosphate (DXP) to 2-C-methyl-D-erythritol 4-phosphate (MEP). The chain is 1-deoxy-D-xylulose 5-phosphate reductoisomerase from Acinetobacter baumannii (strain ATCC 17978 / DSM 105126 / CIP 53.77 / LMG 1025 / NCDC KC755 / 5377).